We begin with the raw amino-acid sequence, 420 residues long: UDP-N-acetyl-D-mannosamine dehydrogenase (420 aa).

NAD(+)-binding residues include Tyr-13, Ile-14, Asp-33, Thr-85, and Thr-126. Arg-160, Val-161, Lys-212, Asn-216, Arg-219, His-250, Arg-252, and Gly-263 together coordinate UDP-N-acetyl-alpha-D-mannosaminouronate. Lys-212 (proton donor/acceptor) is an active-site residue. Catalysis depends on Cys-266, which acts as the Nucleophile. Residues Phe-330 and Lys-331 each contribute to the UDP-N-acetyl-alpha-D-mannosaminouronate site. Arg-338 lines the NAD(+) pocket. Position 416 (Lys-416) interacts with UDP-N-acetyl-alpha-D-mannosaminouronate.

This sequence belongs to the UDP-glucose/GDP-mannose dehydrogenase family. WecC subfamily. Homodimer.

It catalyses the reaction UDP-N-acetyl-alpha-D-mannosamine + 2 NAD(+) + H2O = UDP-N-acetyl-alpha-D-mannosaminouronate + 2 NADH + 3 H(+). It functions in the pathway bacterial outer membrane biogenesis; enterobacterial common antigen biosynthesis. Functionally, catalyzes the four-electron oxidation of UDP-N-acetyl-D-mannosamine (UDP-ManNAc), reducing NAD(+) and releasing UDP-N-acetylmannosaminuronic acid (UDP-ManNAcA). The sequence is that of UDP-N-acetyl-D-mannosamine dehydrogenase from Salmonella typhimurium (strain LT2 / SGSC1412 / ATCC 700720).